Consider the following 239-residue polypeptide: 7-cyano-7-deazaguanine synthase (239 aa).

Residue 7 to 17 (LSGGIDSSTLL) coordinates ATP. Cysteine 184, cysteine 192, cysteine 195, and cysteine 198 together coordinate Zn(2+).

This sequence belongs to the QueC family. Requires Zn(2+) as cofactor.

The enzyme catalyses 7-carboxy-7-deazaguanine + NH4(+) + ATP = 7-cyano-7-deazaguanine + ADP + phosphate + H2O + H(+). The protein operates within purine metabolism; 7-cyano-7-deazaguanine biosynthesis. Functionally, catalyzes the ATP-dependent conversion of 7-carboxy-7-deazaguanine (CDG) to 7-cyano-7-deazaguanine (preQ(0)). The chain is 7-cyano-7-deazaguanine synthase from Archaeoglobus fulgidus (strain ATCC 49558 / DSM 4304 / JCM 9628 / NBRC 100126 / VC-16).